A 141-amino-acid chain; its full sequence is Nucleoside diphosphate kinase (141 aa).

Lys11, Phe59, Arg87, Thr93, Arg104, and Asn114 together coordinate ATP. Residue His117 is the Pros-phosphohistidine intermediate of the active site.

Belongs to the NDK family. In terms of assembly, homotetramer. Mg(2+) serves as cofactor.

It is found in the cytoplasm. It carries out the reaction a 2'-deoxyribonucleoside 5'-diphosphate + ATP = a 2'-deoxyribonucleoside 5'-triphosphate + ADP. The enzyme catalyses a ribonucleoside 5'-diphosphate + ATP = a ribonucleoside 5'-triphosphate + ADP. Major role in the synthesis of nucleoside triphosphates other than ATP. The ATP gamma phosphate is transferred to the NDP beta phosphate via a ping-pong mechanism, using a phosphorylated active-site intermediate. The protein is Nucleoside diphosphate kinase of Cupriavidus taiwanensis (strain DSM 17343 / BCRC 17206 / CCUG 44338 / CIP 107171 / LMG 19424 / R1) (Ralstonia taiwanensis (strain LMG 19424)).